The sequence spans 179 residues: ATP-dependent protease subunit HslV (179 aa).

Residue T7 is part of the active site. The Na(+) site is built by G162, C165, and T168.

This sequence belongs to the peptidase T1B family. HslV subfamily. As to quaternary structure, a double ring-shaped homohexamer of HslV is capped on each side by a ring-shaped HslU homohexamer. The assembly of the HslU/HslV complex is dependent on binding of ATP.

It is found in the cytoplasm. The enzyme catalyses ATP-dependent cleavage of peptide bonds with broad specificity.. Allosterically activated by HslU binding. Functionally, protease subunit of a proteasome-like degradation complex believed to be a general protein degrading machinery. This Bordetella bronchiseptica (strain ATCC BAA-588 / NCTC 13252 / RB50) (Alcaligenes bronchisepticus) protein is ATP-dependent protease subunit HslV.